We begin with the raw amino-acid sequence, 244 residues long: Orotidine 5'-phosphate decarboxylase (244 aa).

Residues D12, K34, 61 to 70 (DLKLFDIPNT), T125, R187, Q196, G216, and R217 each bind substrate. Residue K63 is the Proton donor of the active site.

It belongs to the OMP decarboxylase family. Type 1 subfamily. As to quaternary structure, homodimer.

It catalyses the reaction orotidine 5'-phosphate + H(+) = UMP + CO2. Its pathway is pyrimidine metabolism; UMP biosynthesis via de novo pathway; UMP from orotate: step 2/2. Functionally, catalyzes the decarboxylation of orotidine 5'-monophosphate (OMP) to uridine 5'-monophosphate (UMP). The sequence is that of Orotidine 5'-phosphate decarboxylase from Dictyoglomus turgidum (strain DSM 6724 / Z-1310).